The primary structure comprises 228 residues: 5'-methylthioadenosine/S-adenosylhomocysteine nucleosidase (228 aa).

The active-site Proton acceptor is the Glu-11. Residues Gly-77, Ile-151, and 172 to 173 (ME) contribute to the substrate site. The Proton donor role is filled by Asp-196.

This sequence belongs to the PNP/UDP phosphorylase family. MtnN subfamily.

The enzyme catalyses S-adenosyl-L-homocysteine + H2O = S-(5-deoxy-D-ribos-5-yl)-L-homocysteine + adenine. It catalyses the reaction S-methyl-5'-thioadenosine + H2O = 5-(methylsulfanyl)-D-ribose + adenine. The catalysed reaction is 5'-deoxyadenosine + H2O = 5-deoxy-D-ribose + adenine. The protein operates within amino-acid biosynthesis; L-methionine biosynthesis via salvage pathway; S-methyl-5-thio-alpha-D-ribose 1-phosphate from S-methyl-5'-thioadenosine (hydrolase route): step 1/2. In terms of biological role, catalyzes the irreversible cleavage of the glycosidic bond in both 5'-methylthioadenosine (MTA) and S-adenosylhomocysteine (SAH/AdoHcy) to adenine and the corresponding thioribose, 5'-methylthioribose and S-ribosylhomocysteine, respectively. Also cleaves 5'-deoxyadenosine, a toxic by-product of radical S-adenosylmethionine (SAM) enzymes, into 5-deoxyribose and adenine. The sequence is that of 5'-methylthioadenosine/S-adenosylhomocysteine nucleosidase from Staphylococcus aureus (strain JH1).